Reading from the N-terminus, the 386-residue chain is Glucose-1-phosphate adenylyltransferase (386 aa).

Alpha-D-glucose 1-phosphate is bound by residues tyrosine 100, glycine 165, glutamate 180–lysine 181, and serine 191.

It belongs to the bacterial/plant glucose-1-phosphate adenylyltransferase family. As to quaternary structure, homotetramer.

It catalyses the reaction alpha-D-glucose 1-phosphate + ATP + H(+) = ADP-alpha-D-glucose + diphosphate. It participates in glycan biosynthesis; glycogen biosynthesis. Its function is as follows. Involved in the biosynthesis of ADP-glucose, a building block required for the elongation reactions to produce glycogen. Catalyzes the reaction between ATP and alpha-D-glucose 1-phosphate (G1P) to produce pyrophosphate and ADP-Glc. The polypeptide is Glucose-1-phosphate adenylyltransferase (Clostridium beijerinckii (strain ATCC 51743 / NCIMB 8052) (Clostridium acetobutylicum)).